A 535-amino-acid polypeptide reads, in one-letter code: Bifunctional purine biosynthesis protein PurH (535 aa).

The 146-residue stretch at 6 to 151 folds into the MGS-like domain; sequence TRLPIRRALI…KNHKDVAIVV (146 aa).

It belongs to the PurH family.

It catalyses the reaction (6R)-10-formyltetrahydrofolate + 5-amino-1-(5-phospho-beta-D-ribosyl)imidazole-4-carboxamide = 5-formamido-1-(5-phospho-D-ribosyl)imidazole-4-carboxamide + (6S)-5,6,7,8-tetrahydrofolate. It carries out the reaction IMP + H2O = 5-formamido-1-(5-phospho-D-ribosyl)imidazole-4-carboxamide. Its pathway is purine metabolism; IMP biosynthesis via de novo pathway; 5-formamido-1-(5-phospho-D-ribosyl)imidazole-4-carboxamide from 5-amino-1-(5-phospho-D-ribosyl)imidazole-4-carboxamide (10-formyl THF route): step 1/1. The protein operates within purine metabolism; IMP biosynthesis via de novo pathway; IMP from 5-formamido-1-(5-phospho-D-ribosyl)imidazole-4-carboxamide: step 1/1. This is Bifunctional purine biosynthesis protein PurH from Pseudomonas aeruginosa (strain LESB58).